A 634-amino-acid chain; its full sequence is 1-deoxy-D-xylulose-5-phosphate synthase (634 aa).

Thiamine diphosphate contacts are provided by residues His-74 and 115 to 117 (AHS). Residue Asp-146 coordinates Mg(2+). Thiamine diphosphate is bound by residues 147–148 (GA), Asn-176, Tyr-283, and Glu-365. Residue Asn-176 coordinates Mg(2+).

The protein belongs to the transketolase family. DXPS subfamily. In terms of assembly, homodimer. Mg(2+) serves as cofactor. The cofactor is thiamine diphosphate.

The enzyme catalyses D-glyceraldehyde 3-phosphate + pyruvate + H(+) = 1-deoxy-D-xylulose 5-phosphate + CO2. It participates in metabolic intermediate biosynthesis; 1-deoxy-D-xylulose 5-phosphate biosynthesis; 1-deoxy-D-xylulose 5-phosphate from D-glyceraldehyde 3-phosphate and pyruvate: step 1/1. Catalyzes the acyloin condensation reaction between C atoms 2 and 3 of pyruvate and glyceraldehyde 3-phosphate to yield 1-deoxy-D-xylulose-5-phosphate (DXP). This Burkholderia pseudomallei (strain 668) protein is 1-deoxy-D-xylulose-5-phosphate synthase.